Consider the following 364-residue polypeptide: Photoreceptor outer segment membrane glycoprotein 2 (364 aa).

Residues 1–24 (MTVLKVKFTKTKRDKLAQILWILN) lie on the Cytoplasmic side of the membrane. A helical transmembrane segment spans residues 25–43 (WVSVVSGIILFSLGLFLKI). Over 44–61 (EIKKRNEVMAKGDINSVP) the chain is Lumenal. The helical transmembrane segment at 62–80 (NMLISVGVIACVVNFLGGK) threads the bilayer. Residues 81–99 (ICYDCSDANKFSRWKLIML) lie on the Cytoplasmic side of the membrane. A helical membrane pass occupies residues 100–123 (PYIICTFCFTFCILLGALMCYTMR). The Lumenal portion of the chain corresponds to 124 to 264 (NELEESLYLG…LEYYTAIMRS (141 aa)). N-linked (GlcNAc...) asparagine glycosylation occurs at Asn229. The chain crosses the membrane as a helical span at residues 265–290 (IGIAALLIWLFELSVLIGVRYLQTAM). At 291-364 (KNVLLQGDLQ…VTAKSIPAAS (74 aa)) the chain is on the cytoplasmic side.

The protein belongs to the PRPH2/ROM1 family.

It is found in the membrane. The polypeptide is Photoreceptor outer segment membrane glycoprotein 2 (Gallus gallus (Chicken)).